A 174-amino-acid polypeptide reads, in one-letter code: 2-oxo-4-hydroxy-4-carboxy-5-ureidoimidazoline decarboxylase (174 aa).

His-67 acts as the Proton donor in catalysis. Substrate is bound by residues Pro-68, 84 to 88, and 119 to 123; these read SQEEQ and FVICA. Residues 172–174 carry the Microbody targeting signal motif; the sequence is TKL.

It belongs to the OHCU decarboxylase family. In terms of assembly, homodimer.

The protein resides in the peroxisome. The catalysed reaction is 5-hydroxy-2-oxo-4-ureido-2,5-dihydro-1H-imidazole-5-carboxylate + H(+) = (S)-allantoin + CO2. The protein operates within purine metabolism; urate degradation; (S)-allantoin from urate: step 3/3. Its function is as follows. Catalyzes the stereoselective decarboxylation of 2-oxo-4-hydroxy-4-carboxy-5-ureidoimidazoline (OHCU) to (S)-allantoin. The protein is 2-oxo-4-hydroxy-4-carboxy-5-ureidoimidazoline decarboxylase (urad) of Danio rerio (Zebrafish).